A 279-amino-acid polypeptide reads, in one-letter code: Protein phosphatase 1 regulatory subunit 3E (279 aa).

Phosphoserine is present on residues serine 16 and serine 33. Residues 28–87 (RSQRPSLEEESEEEPGEGGTRPGARSRAHVPGRGRRARSAPAGGGGARTARSRSPDTRKR) form a disordered region. Residues 51-65 (ARSRAHVPGRGRRAR) are compositionally biased toward basic residues. Serine 66 bears the Phosphoserine mark. The PP1-binding motif motif lies at 87–90 (RVRF). Residues 154–259 (AARLQAQRIC…NNGGRDYALL (106 aa)) form the CBM21 domain. The segment at 176-198 (GSARVLDLAYEKRVSVRWSADGW) is glycogen-binding motif. The interval 248 to 256 (WDNNGGRDY) is substrate-binding motif.

In terms of biological role, acts as a glycogen-targeting subunit for PP1. PP1 is involved in glycogen metabolism and contributes to the activation of glycogen synthase leading to an increase in glycogen synthesis. The sequence is that of Protein phosphatase 1 regulatory subunit 3E (Ppp1r3e) from Mus musculus (Mouse).